The primary structure comprises 97 residues: MSSAPEPPTFKKEPPKEKDFQSPGLRGVRTTTLFRAVNPELFIKPNKPVMAFGLVTLSLCVAYIGYLHATQENKKDLYEAIDSEGHSYMRRKTSKWD.

The segment at 1 to 24 is disordered; it reads MSSAPEPPTFKKEPPKEKDFQSPG. Residues 9–20 show a composition bias toward basic and acidic residues; sequence TFKKEPPKEKDF. Residues 48–67 traverse the membrane as a helical segment; that stretch reads PVMAFGLVTLSLCVAYIGYL.

It belongs to the SMIM8 family.

The protein resides in the membrane. This chain is Small integral membrane protein 8 (SMIM8), found in Pongo abelii (Sumatran orangutan).